A 616-amino-acid chain; its full sequence is Elongation factor 4 (616 aa).

One can recognise a tr-type G domain in the interval 14–195 (SRIRNFCIIA…EVIRQVPPPV (182 aa)). GTP-binding positions include 26–31 (DHGKST) and 142–145 (NKID).

The protein belongs to the TRAFAC class translation factor GTPase superfamily. Classic translation factor GTPase family. LepA subfamily.

The protein localises to the cell membrane. The catalysed reaction is GTP + H2O = GDP + phosphate + H(+). Its function is as follows. Required for accurate and efficient protein synthesis under certain stress conditions. May act as a fidelity factor of the translation reaction, by catalyzing a one-codon backward translocation of tRNAs on improperly translocated ribosomes. Back-translocation proceeds from a post-translocation (POST) complex to a pre-translocation (PRE) complex, thus giving elongation factor G a second chance to translocate the tRNAs correctly. Binds to ribosomes in a GTP-dependent manner. The chain is Elongation factor 4 from Nocardia farcinica (strain IFM 10152).